We begin with the raw amino-acid sequence, 171 residues long: Large ribosomal subunit protein uL10 (171 aa).

This sequence belongs to the universal ribosomal protein uL10 family. Part of the ribosomal stalk of the 50S ribosomal subunit. The N-terminus interacts with L11 and the large rRNA to form the base of the stalk. The C-terminus forms an elongated spine to which L12 dimers bind in a sequential fashion forming a multimeric L10(L12)X complex.

In terms of biological role, forms part of the ribosomal stalk, playing a central role in the interaction of the ribosome with GTP-bound translation factors. The protein is Large ribosomal subunit protein uL10 of Corynebacterium jeikeium (strain K411).